The sequence spans 229 residues: Large ribosomal subunit protein uL1 (229 aa).

This sequence belongs to the universal ribosomal protein uL1 family. In terms of assembly, part of the 50S ribosomal subunit.

Its function is as follows. Binds directly to 23S rRNA. The L1 stalk is quite mobile in the ribosome, and is involved in E site tRNA release. Functionally, protein L1 is also a translational repressor protein, it controls the translation of the L11 operon by binding to its mRNA. The protein is Large ribosomal subunit protein uL1 of Chlorobium chlorochromatii (strain CaD3).